An 808-amino-acid chain; its full sequence is Enhancer of polycomb homolog 2 (808 aa).

Glycyl lysine isopeptide (Lys-Gly) (interchain with G-Cter in SUMO2) cross-links involve residues Lys135, Lys195, and Lys324. The disordered stretch occupies residues 337–357 (YPKKPKAEAGIAPQQPTPETL). Lys362 is covalently cross-linked (Glycyl lysine isopeptide (Lys-Gly) (interchain with G-Cter in SUMO2)). 3 disordered regions span residues 371 to 397 (QSSD…PDGS), 595 to 630 (QRQQ…CMSK), and 645 to 682 (VSAP…LYST). A compositionally biased stretch (low complexity) spans 595–614 (QRQQLAQLHQKQQSQHSSQQ). Polar residues-rich tracts occupy residues 615-630 (THPK…CMSK) and 658-682 (EQNT…LYST). At Ser755 the chain carries Phosphoserine.

It belongs to the enhancer of polycomb family.

The protein resides in the nucleus. In terms of biological role, may play a role in transcription or DNA repair. This chain is Enhancer of polycomb homolog 2 (Epc2), found in Mus musculus (Mouse).